Consider the following 211-residue polypeptide: Uracil phosphoribosyltransferase (211 aa).

5-phospho-alpha-D-ribose 1-diphosphate contacts are provided by residues Arg79, Arg104, and 131 to 139; that span reads DPMLATGGS. Uracil contacts are provided by residues Ile196 and 201–203; that span reads GDA. Asp202 is a binding site for 5-phospho-alpha-D-ribose 1-diphosphate.

Belongs to the UPRTase family. Mg(2+) is required as a cofactor.

The enzyme catalyses UMP + diphosphate = 5-phospho-alpha-D-ribose 1-diphosphate + uracil. Its pathway is pyrimidine metabolism; UMP biosynthesis via salvage pathway; UMP from uracil: step 1/1. With respect to regulation, allosterically activated by GTP. In terms of biological role, catalyzes the conversion of uracil and 5-phospho-alpha-D-ribose 1-diphosphate (PRPP) to UMP and diphosphate. The protein is Uracil phosphoribosyltransferase of Limosilactobacillus reuteri (strain DSM 20016) (Lactobacillus reuteri).